The sequence spans 156 residues: MPRRREVPKREILPDPKFGSQDLSKFMNVVMIDGKKSVAERIIYGALEQIEKKTGKNAIEVFNTALSNAKPVVEVKSRRVGGANYQVPVEVRPSRRMALAMRWLRDAARKRGEKSMDLRLAGELIDAAEGRGGAMKKRDEVHRMAEANKAFSHFRF.

Belongs to the universal ribosomal protein uS7 family. As to quaternary structure, part of the 30S ribosomal subunit. Contacts proteins S9 and S11.

In terms of biological role, one of the primary rRNA binding proteins, it binds directly to 16S rRNA where it nucleates assembly of the head domain of the 30S subunit. Is located at the subunit interface close to the decoding center, probably blocks exit of the E-site tRNA. In Chromobacterium violaceum (strain ATCC 12472 / DSM 30191 / JCM 1249 / CCUG 213 / NBRC 12614 / NCIMB 9131 / NCTC 9757 / MK), this protein is Small ribosomal subunit protein uS7.